The sequence spans 192 residues: Probable metallophosphoesterase MJ0623 (192 aa).

A divalent metal cation contacts are provided by D41, H43, D70, N92, H115, H144, and H146.

The protein belongs to the metallophosphoesterase superfamily. YfcE family. The cofactor is a divalent metal cation.

This chain is Probable metallophosphoesterase MJ0623, found in Methanocaldococcus jannaschii (strain ATCC 43067 / DSM 2661 / JAL-1 / JCM 10045 / NBRC 100440) (Methanococcus jannaschii).